The primary structure comprises 171 residues: 3-hydroxydecanoyl-[acyl-carrier-protein] dehydratase (171 aa).

Residue His70 is part of the active site.

It belongs to the thioester dehydratase family. FabA subfamily. As to quaternary structure, homodimer.

Its subcellular location is the cytoplasm. The enzyme catalyses a (3R)-hydroxyacyl-[ACP] = a (2E)-enoyl-[ACP] + H2O. It carries out the reaction (3R)-hydroxydecanoyl-[ACP] = (2E)-decenoyl-[ACP] + H2O. It catalyses the reaction (2E)-decenoyl-[ACP] = (3Z)-decenoyl-[ACP]. Its pathway is lipid metabolism; fatty acid biosynthesis. In terms of biological role, necessary for the introduction of cis unsaturation into fatty acids. Catalyzes the dehydration of (3R)-3-hydroxydecanoyl-ACP to E-(2)-decenoyl-ACP and then its isomerization to Z-(3)-decenoyl-ACP. Can catalyze the dehydratase reaction for beta-hydroxyacyl-ACPs with saturated chain lengths up to 16:0, being most active on intermediate chain length. This is 3-hydroxydecanoyl-[acyl-carrier-protein] dehydratase from Mesorhizobium japonicum (strain LMG 29417 / CECT 9101 / MAFF 303099) (Mesorhizobium loti (strain MAFF 303099)).